A 694-amino-acid polypeptide reads, in one-letter code: Prolyl 3-hydroxylase 2 (694 aa).

Residues 1–23 (MAPGSRSWGAVLLLAAMLPAACG) form the signal peptide. 4 TPR repeats span residues 35 to 68 (FDALYASGVEAYYGGDFAGAARCLEQALRSRREL), 136 to 169 (RVPYSYLQRAYIQLNKLEEAANAAHTFFMANPEH), 196 to 229 (HMEDYSAGVRHYDKEEYGLAITFLERALEGYYAE), and 292 to 325 (PLHYDYLQFAYYRVGDYVKALECARSYLLFHPDD). The stretch at 386 to 418 (KRYGARQDEHSVPSSISSEPEDGPRLSLTKKPT) forms a coiled coil. The disordered stretch occupies residues 395-427 (HSVPSSISSEPEDGPRLSLTKKPTPKPDRELKE). N-linked (GlcNAc...) asparagine glycosylation is found at asparagine 446 and asparagine 535. Residues 543 to 657 (THLVCRTALS…RCAVALWFTL (115 aa)) form the Fe2OG dioxygenase domain. 3 residues coordinate Fe cation: histidine 566, aspartate 568, and histidine 638. Residue arginine 648 is part of the active site. Residues 691-694 (KDEL) carry the Prevents secretion from ER motif.

Belongs to the leprecan family. The cofactor is Fe cation. It depends on L-ascorbate as a cofactor.

The protein localises to the endoplasmic reticulum. The protein resides in the sarcoplasmic reticulum. It is found in the golgi apparatus. The catalysed reaction is L-prolyl-[collagen] + 2-oxoglutarate + O2 = trans-3-hydroxy-L-prolyl-[collagen] + succinate + CO2. Prolyl 3-hydroxylase that catalyzes the post-translational formation of 3-hydroxyproline on collagens. Contributes to proline 3-hydroxylation of collagen COL4A1 and COL1A1 in tendons, the eye sclera and in the eye lens capsule. Has high activity with the type IV collagen COL4A1, and lower activity with COL1A1. Catalyzes hydroxylation of the first Pro in Gly-Pro-Hyp sequences where Hyp is 4-hydroxyproline. Has no activity on substrates that lack 4-hydroxyproline in the third position. The polypeptide is Prolyl 3-hydroxylase 2 (Gallus gallus (Chicken)).